We begin with the raw amino-acid sequence, 184 residues long: GTP cyclohydrolase 1 (184 aa).

Zn(2+) is bound by residues cysteine 75, histidine 78, and cysteine 146.

It belongs to the GTP cyclohydrolase I family. As to quaternary structure, homomer.

The catalysed reaction is GTP + H2O = 7,8-dihydroneopterin 3'-triphosphate + formate + H(+). The protein operates within cofactor biosynthesis; 7,8-dihydroneopterin triphosphate biosynthesis; 7,8-dihydroneopterin triphosphate from GTP: step 1/1. This is GTP cyclohydrolase 1 from Coxiella burnetii (strain Dugway 5J108-111).